The chain runs to 1210 residues: A disintegrin and metalloproteinase with thrombospondin motifs 19 (1210 aa).

An N-terminal signal peptide occupies residues 1-30; that stretch reads MGPEMRLTRICCCCCLLYQLGFLSHGTTSG. Positions 31-319 are excised as a propeptide; sequence LQLTPDLEEW…KIADNRREKR (289 aa). The N-linked (GlcNAc...) asparagine glycan is linked to Asn-54. The segment at 55 to 166 is disordered; that stretch reads ATGLSGGSSD…PAQQEEPSAE (112 aa). Gly residues predominate over residues 69–78; it reads RSSGGGGRGQ. Positions 84 to 98 are enriched in basic and acidic residues; the sequence is REVRSVARAPQEEAT. The span at 113 to 122 shows a compositional bias: acidic residues; the sequence is GAEDEEELES. Residues 130–139 show a composition bias toward polar residues; it reads SGDTALSSGT. Pro residues predominate over residues 143–158; the sequence is WQPPLPPQRPSSPPPA. N-linked (GlcNAc...) asparagine glycosylation occurs at Asn-263. Residues 295–302 carry the Cysteine switch motif; that stretch reads HHCGVISD. Cys-297 is a Zn(2+) binding site. A Peptidase M12B domain is found at 328-548; that stretch reads YNIETVVVAD…KASSCLLHTD (221 aa). Intrachain disulfides connect Cys-404/Cys-469, Cys-444/Cys-451, Cys-463/Cys-543, Cys-502/Cys-527, Cys-572/Cys-596, Cys-583/Cys-604, Cys-591/Cys-623, Cys-617/Cys-628, Cys-648/Cys-683, Cys-652/Cys-688, and Cys-663/Cys-673. Residue His-485 participates in Zn(2+) binding. Glu-486 is an active-site residue. Residues His-489 and His-495 each contribute to the Zn(2+) site. A Disintegrin domain is found at 549 to 636; it reads PQSLSSVLVP…ECTRRTPAPE (88 aa). The TSP type-1 1 domain occupies 637–689; the sequence is HLAGEWSPWSSCSRSCSSGVSSRERKCPGLGSEARDCNGPRKQYRICENPPCP. The spacer stretch occupies residues 794–917; the sequence is VIKGDFNHTR…PDNQSSKEPG (124 aa). Asn-800, Asn-910, Asn-931, Asn-952, and Asn-1012 each carry an N-linked (GlcNAc...) asparagine glycan. 4 TSP type-1 domains span residues 918 to 978, 979 to 1040, 1042 to 1086, and 1090 to 1147; these read PLFM…NEQP, CQTR…QDCM, VWEA…EDCE, and KCYV…QPCN. Intrachain disulfides connect Cys-991–Cys-1034, Cys-995–Cys-1039, and Cys-1006–Cys-1023. The 40-residue stretch at 1163-1202 folds into the PLAC domain; that stretch reads LTFKCLGDQWPVYCRVIREKNLCQDMRWYQRCCETCRDFY.

Requires Zn(2+) as cofactor. The precursor is cleaved by a furin endopeptidase. In terms of processing, glycosylated. Can be O-fucosylated by POFUT2 on a serine or a threonine residue found within the consensus sequence C1-X(2)-(S/T)-C2-G of the TSP type-1 repeat domains where C1 and C2 are the first and second cysteine residue of the repeat, respectively. Fucosylated repeats can then be further glycosylated by the addition of a beta-1,3-glucose residue by the glucosyltransferase, B3GALTL. Fucosylation mediates the efficient secretion of ADAMTS family members. Can also be C-glycosylated with one or two mannose molecules on tryptophan residues within the consensus sequence W-X-X-W of the TPRs, and N-glycosylated. These other glycosylations can also facilitate secretion. Expressed predominantly in fetal ovary, low levels of expression is also detected in kidney, heart, skeletal muscle, lung and testis.

It localises to the secreted. Its subcellular location is the extracellular space. The protein resides in the extracellular matrix. This chain is A disintegrin and metalloproteinase with thrombospondin motifs 19 (Adamts19), found in Mus musculus (Mouse).